The following is a 686-amino-acid chain: Leucine-rich repeat-containing protein 49 (686 aa).

LRR repeat units follow at residues 113–134, 135–156, 157–178, 179–200, 201–222, 223–244, and 245–266; these read HLRL…SNLQ, RLIF…STLK, SLRV…ENLK, NLDV…NHLC, DLRV…NGLD, SLTE…DNLP, and CLQR…SCLA. The LRRCT domain maps to 279–317; the sequence is NPIAQESWYKHTVLQNMMQLRQLDMKRITEEERRVASVV. Disordered regions lie at residues 311–332 and 359–381; these read RRVA…HKQS and ASTQ…DGGN. Residues 319–341 adopt a coiled-coil conformation; sequence KKEEEKKRESHKQSLLKEKKRLT.

Part of the neuronal tubulin polyglutamylase complex which contains TPGS1, TPGS2, TTLL1, LRRC49 and NICN1. Interacts with PCM1; TTLL1, TPGS1, TPGS2 and LRRC49.

It is found in the cytoplasm. The protein localises to the cytoskeleton. It localises to the microtubule organizing center. Its subcellular location is the centrosome. The protein resides in the centriolar satellite. In terms of biological role, subunit of the tubulin polyglutamylase complex (TPGC). The complex mediates cilia and flagella polyglutamylation which is essential for their biogenesis and motility. The chain is Leucine-rich repeat-containing protein 49 (Lrrc49) from Mus musculus (Mouse).